The following is a 654-amino-acid chain: Periplasmic beta-glucosidase/beta-xylosidase (654 aa).

A signal peptide spans 1–25 (MEKSATRQKALLIALPLLFSPLASA). Catalysis depends on residues D235 and D360.

This sequence belongs to the glycosyl hydrolase 3 family.

Its subcellular location is the periplasm. It catalyses the reaction Hydrolysis of terminal, non-reducing beta-D-glucosyl residues with release of beta-D-glucose.. It carries out the reaction Hydrolysis of (1-&gt;4)-beta-D-xylans, to remove successive D-xylose residues from the non-reducing termini.. In terms of biological role, exhibits both beta-glucosidase and beta-xylosidase activities. In Dickeya chrysanthemi (Pectobacterium chrysanthemi), this protein is Periplasmic beta-glucosidase/beta-xylosidase (bgxA).